Here is a 518-residue protein sequence, read N- to C-terminus: Serine--tRNA ligase, mitochondrial (518 aa).

Residues 1 to 34 constitute a mitochondrion transit peptide; sequence MAASIVRRLGPLVAGRGLRLRGGCVCNQSFKRSF. Lysine 110 is subject to N6-acetyllysine. An N6-succinyllysine modification is found at lysine 195. Position 299-301 (299-301) interacts with L-serine; it reads TAE. An ATP-binding site is contributed by 330 to 332; sequence RAE. An N6-succinyllysine modification is found at lysine 337. Valine 345 serves as a coordination point for ATP. An L-serine-binding site is contributed by glutamate 352. 418–421 provides a ligand contact to ATP; that stretch reads EVTS. Threonine 453 contacts L-serine. Positions 497-518 are disordered; sequence PLQYIGPNQPQKPRLPGQPASS.

The protein belongs to the class-II aminoacyl-tRNA synthetase family. Type-1 seryl-tRNA synthetase subfamily. As to quaternary structure, homodimer. The tRNA molecule probably binds across the dimer. Two N-termini starting at positions 35 and 37 have been identified by direct sequencing.

It is found in the mitochondrion matrix. The catalysed reaction is tRNA(Ser) + L-serine + ATP = L-seryl-tRNA(Ser) + AMP + diphosphate + H(+). The enzyme catalyses tRNA(Sec) + L-serine + ATP = L-seryl-tRNA(Sec) + AMP + diphosphate + H(+). It participates in aminoacyl-tRNA biosynthesis; selenocysteinyl-tRNA(Sec) biosynthesis; L-seryl-tRNA(Sec) from L-serine and tRNA(Sec): step 1/1. Its function is as follows. Catalyzes the attachment of serine to tRNA(Ser). Is also probably able to aminoacylate tRNA(Sec) with serine, to form the misacylated tRNA L-seryl-tRNA(Sec), which will be further converted into selenocysteinyl-tRNA(Sec). The chain is Serine--tRNA ligase, mitochondrial (SARS2) from Bos taurus (Bovine).